A 658-amino-acid chain; its full sequence is Putative phospholipase B-like lamina ancestor (658 aa).

A signal peptide spans 1-29; it reads MLKVVGASWQKTRIGTYILIGAGLLVIGA. 3 N-linked (GlcNAc...) asparagine glycosylation sites follow: Asn-229, Asn-465, and Asn-486.

Belongs to the phospholipase B-like family. In terms of tissue distribution, expressed in neural and glial progenitors prior to, but not after, differentiation. Not expressed in late third instar disks, but is expressed uniformly by early third instar disks, in the imaginal ring of the proventriculus and in the salivary gland.

It localises to the secreted. Functionally, putative phospholipase. Involved in the regulation of cellular plasticity in imaginal disks. The protein is Putative phospholipase B-like lamina ancestor (lama) of Drosophila melanogaster (Fruit fly).